Reading from the N-terminus, the 116-residue chain is MSTVELLKHIYDINLSYLLLAQRLINHEKASAMFRLGISESMADTLAELTLPQLVKLAETNQLICHFRFEDHETVQQLTKESRVDDLQQIHTGILLSTHLFQQLSAQDDTSIKKRA.

The protein belongs to the FlhD family. In terms of assembly, homodimer; disulfide-linked. Forms a heterohexamer composed of two FlhC and four FlhD subunits. Each FlhC binds a FlhD dimer, forming a heterotrimer, and a hexamer assembles by dimerization of two heterotrimers.

The protein localises to the cytoplasm. Functions in complex with FlhC as a master transcriptional regulator that regulates transcription of several flagellar and non-flagellar operons by binding to their promoter region. Activates expression of class 2 flagellar genes, including fliA, which is a flagellum-specific sigma factor that turns on the class 3 genes. Also regulates genes whose products function in a variety of physiological pathways. This chain is Flagellar transcriptional regulator FlhD, found in Xenorhabdus nematophila (Achromobacter nematophilus).